The primary structure comprises 310 residues: Malate dehydrogenase (310 aa).

Residues 7–13 (GAAGGIG) and Asp-34 each bind NAD(+). Substrate is bound by residues Arg-81 and Arg-87. Residues Asn-94 and 117–119 (ITN) each bind NAD(+). Substrate-binding residues include Asn-119 and Arg-153. His-177 (proton acceptor) is an active-site residue. Position 227 (Met-227) interacts with NAD(+).

Belongs to the LDH/MDH superfamily. MDH type 1 family. Homodimer.

It carries out the reaction (S)-malate + NAD(+) = oxaloacetate + NADH + H(+). Functionally, catalyzes the reversible oxidation of malate to oxaloacetate. This chain is Malate dehydrogenase, found in Idiomarina loihiensis (strain ATCC BAA-735 / DSM 15497 / L2-TR).